We begin with the raw amino-acid sequence, 307 residues long: Quinolinate synthase (307 aa).

2 residues coordinate iminosuccinate: histidine 20 and serine 37. Residue cysteine 82 participates in [4Fe-4S] cluster binding. Residues 108–110 and serine 125 contribute to the iminosuccinate site; that span reads YIN. [4Fe-4S] cluster is bound at residue cysteine 168. Residues 194-196 and threonine 219 contribute to the iminosuccinate site; that span reads HPE. Cysteine 264 contributes to the [4Fe-4S] cluster binding site.

Belongs to the quinolinate synthase family. Type 2 subfamily. [4Fe-4S] cluster is required as a cofactor.

The protein resides in the cytoplasm. The catalysed reaction is iminosuccinate + dihydroxyacetone phosphate = quinolinate + phosphate + 2 H2O + H(+). It participates in cofactor biosynthesis; NAD(+) biosynthesis; quinolinate from iminoaspartate: step 1/1. Catalyzes the condensation of iminoaspartate with dihydroxyacetone phosphate to form quinolinate. The sequence is that of Quinolinate synthase from Pyrobaculum aerophilum (strain ATCC 51768 / DSM 7523 / JCM 9630 / CIP 104966 / NBRC 100827 / IM2).